A 122-amino-acid polypeptide reads, in one-letter code: FMN-binding protein (122 aa).

As to quaternary structure, monomer and homodimer. It depends on FMN as a cofactor.

It localises to the cytoplasm. Functionally, functions as a redox protein with a potential of -325 mV. This Nitratidesulfovibrio vulgaris (strain DSM 19637 / Miyazaki F) (Desulfovibrio vulgaris) protein is FMN-binding protein.